The sequence spans 359 residues: Phospho-N-acetylmuramoyl-pentapeptide-transferase (359 aa).

Transmembrane regions (helical) follow at residues 3–23 (QIII…PVLI), 55–75 (VAIL…GIAF), 84–104 (GLLV…DDFI), 117–137 (TSKT…VLQF), 156–176 (IATV…LVMS), 187–207 (LDGL…IVTF), 231–251 (LAVI…WNAA), 255–275 (IFMG…LSVT), 280–300 (LLAV…VLQI), and 334–354 (FWLL…GEWL).

It belongs to the glycosyltransferase 4 family. MraY subfamily. The cofactor is Mg(2+).

It localises to the cell membrane. It catalyses the reaction UDP-N-acetyl-alpha-D-muramoyl-L-alanyl-gamma-D-glutamyl-meso-2,6-diaminopimeloyl-D-alanyl-D-alanine + di-trans,octa-cis-undecaprenyl phosphate = di-trans,octa-cis-undecaprenyl diphospho-N-acetyl-alpha-D-muramoyl-L-alanyl-D-glutamyl-meso-2,6-diaminopimeloyl-D-alanyl-D-alanine + UMP. It functions in the pathway cell wall biogenesis; peptidoglycan biosynthesis. Its function is as follows. Catalyzes the initial step of the lipid cycle reactions in the biosynthesis of the cell wall peptidoglycan: transfers peptidoglycan precursor phospho-MurNAc-pentapeptide from UDP-MurNAc-pentapeptide onto the lipid carrier undecaprenyl phosphate, yielding undecaprenyl-pyrophosphoryl-MurNAc-pentapeptide, known as lipid I. This Mycobacteroides abscessus (strain ATCC 19977 / DSM 44196 / CCUG 20993 / CIP 104536 / JCM 13569 / NCTC 13031 / TMC 1543 / L948) (Mycobacterium abscessus) protein is Phospho-N-acetylmuramoyl-pentapeptide-transferase.